The primary structure comprises 420 residues: Glutamate dehydrogenase (420 aa).

Lys-105 is a catalytic residue. Position 220-226 (220-226) interacts with NAD(+); sequence GYGNAGY.

The protein belongs to the Glu/Leu/Phe/Val dehydrogenases family. As to quaternary structure, homohexamer.

It is found in the cytoplasm. The enzyme catalyses L-glutamate + NAD(+) + H2O = 2-oxoglutarate + NH4(+) + NADH + H(+). It catalyses the reaction L-glutamate + NADP(+) + H2O = 2-oxoglutarate + NH4(+) + NADPH + H(+). The chain is Glutamate dehydrogenase (gdhA) from Pyrococcus furiosus (strain ATCC 43587 / DSM 3638 / JCM 8422 / Vc1).